Consider the following 104-residue polypeptide: uncharacterized protein (104 aa).

This is an uncharacterized protein from Acidithiobacillus ferridurans.